A 107-amino-acid polypeptide reads, in one-letter code: MPRKRLTGIVVSDKMDKTVVVAVEKLVQHPIYKKYVKRTKKYHAHDERNECKIGDVVEIEETRPLSKTKRWRVVRIIQRFEPERVLKEEEDIQEEIEAVEGKGGVES.

The protein belongs to the universal ribosomal protein uS17 family. In terms of assembly, part of the 30S ribosomal subunit.

One of the primary rRNA binding proteins, it binds specifically to the 5'-end of 16S ribosomal RNA. The chain is Small ribosomal subunit protein uS17 from Thermotoga petrophila (strain ATCC BAA-488 / DSM 13995 / JCM 10881 / RKU-1).